The sequence spans 312 residues: Ribonuclease Z (312 aa).

Zn(2+)-binding residues include His62, His64, Asp66, His67, His139, Asp210, and His268. The active-site Proton acceptor is the Asp66.

It belongs to the RNase Z family. Homodimer. The cofactor is Zn(2+).

The enzyme catalyses Endonucleolytic cleavage of RNA, removing extra 3' nucleotides from tRNA precursor, generating 3' termini of tRNAs. A 3'-hydroxy group is left at the tRNA terminus and a 5'-phosphoryl group is left at the trailer molecule.. Functionally, zinc phosphodiesterase, which displays some tRNA 3'-processing endonuclease activity. Probably involved in tRNA maturation, by removing a 3'-trailer from precursor tRNA. This chain is Ribonuclease Z, found in Crocosphaera subtropica (strain ATCC 51142 / BH68) (Cyanothece sp. (strain ATCC 51142)).